A 418-amino-acid polypeptide reads, in one-letter code: Voltage-gated ClC-type chloride channel ClcB (418 aa).

Helical transmembrane passes span 5-25 (LLIATVVGILAAFAVAGFRHA), 54-74 (LLTPALGGLAAGLLLMGWQKF), 146-166 (LWIACGAAAGMAAAYRAPLAG), 168-188 (LFIAEVLFGTMMLASLGPVII), 222-242 (ALIISTGVLAGLCGPLLLTLM), 258-278 (WQLALGGLIVGLLSLFTPAVW), 291-311 (APPLLMIIAGIFLCKLFAVLA), 316-336 (GAPGGVFTPTLFIGLAIGMLY), 352-372 (LLLGLTGMATLLAATTHAPIM), and 380-400 (MTGEYQLLPGLLIACVIASVI).

It belongs to the chloride channel (TC 2.A.49) family. ClcB subfamily.

It is found in the cell inner membrane. In terms of biological role, probably acts as an electrical shunt for an outwardly-directed proton pump that is linked to amino acid decarboxylation, as part of the extreme acid resistance (XAR) response. This chain is Voltage-gated ClC-type chloride channel ClcB, found in Escherichia coli (strain SMS-3-5 / SECEC).